A 281-amino-acid polypeptide reads, in one-letter code: D-arabinitol 2-dehydrogenase [ribulose-forming] (281 aa).

NADP(+)-binding residues include L31 and N52. S169 acts as the Proton donor in catalysis. The NADP(+) site is built by Y184, K188, I217, and T219. Y184 serves as the catalytic Proton acceptor. Catalysis depends on K188, which acts as the Lowers pKa of active site Tyr.

Belongs to the short-chain dehydrogenases/reductases (SDR) family.

It catalyses the reaction D-arabinitol + NAD(+) = D-ribulose + NADH + H(+). Its pathway is carbohydrate metabolism; D-arabinitol metabolism. The sequence is that of D-arabinitol 2-dehydrogenase [ribulose-forming] (ARD1) from Candida albicans (strain WO-1) (Yeast).